A 102-amino-acid polypeptide reads, in one-letter code: Small ribosomal subunit protein uS10 (102 aa).

This sequence belongs to the universal ribosomal protein uS10 family. In terms of assembly, part of the 30S ribosomal subunit.

Functionally, involved in the binding of tRNA to the ribosomes. This Streptococcus pneumoniae (strain Taiwan19F-14) protein is Small ribosomal subunit protein uS10.